A 102-amino-acid polypeptide reads, in one-letter code: Caroteno-chlorophyll a-c-binding protein (102 aa).

Positions 36 and 39 each coordinate chlorophyll a. A helical transmembrane segment spans residues 78 to 98; sequence VLGLIKIVPAGLWGIMIFYAA.

Belongs to the light-harvesting chlorophyll a/b-binding (LHC) protein family. As to quaternary structure, the LHC complex consists of chlorophyll a-b binding proteins. Requires Binds at least 14 chlorophylls (8 Chl-a and 6 Chl-b) and carotenoids such as lutein and neoxanthin. as cofactor. Post-translationally, photoregulated by reversible phosphorylation of its threonine residues.

It localises to the plastid. The protein resides in the chloroplast thylakoid membrane. Functionally, the light-harvesting complex (LHC) functions as a light receptor, it captures and delivers excitation energy to photosystems with which it is closely associated. The chain is Caroteno-chlorophyll a-c-binding protein from Amphidinium carterae (Dinoflagellate).